Here is a 72-residue protein sequence, read N- to C-terminus: Hirudin variant-2 (72 aa).

A signal peptide spans 1-7 (AICVSQA). The tract at residues 8-10 (ITY) is interaction with thrombin active site. Intrachain disulfides connect C13/C21, C23/C35, and C29/C46. The segment at 47–72 (VTGEGTPNPESHNNGDFEEIPEEYLQ) is disordered. O-linked (GalNAc...) threonine glycosylation occurs at T52. Residues 62-72 (DFEEIPEEYLQ) form an interaction with fibrinogen-binding exosite of thrombin region. A compositionally biased stretch (acidic residues) spans 62-72 (DFEEIPEEYLQ). At Y70 the chain carries Sulfotyrosine.

This sequence belongs to the protease inhibitor I14 (hirudin) family.

Its subcellular location is the secreted. Hirudin is a potent thrombin-specific protease inhibitor. It forms a stable non-covalent complex with alpha-thrombin, thereby abolishing its ability to cleave fibrinogen. The chain is Hirudin variant-2 from Hirudo medicinalis (Medicinal leech).